The sequence spans 201 residues: Homeobox protein ceh-28 (201 aa).

The segment covering 72–84 (SYYSSPSQNQRSY) has biased composition (polar residues). The interval 72–94 (SYYSSPSQNQRSYQNHRQHSNPD) is disordered. Positions 104-163 (KRKPRVLFTQHQVNELEERFKKQRYVTATEREELAQCLGLTATQVKIWFQNRRYKCKRLA) form a DNA-binding region, homeobox.

The protein belongs to the NK-2 homeobox family.

It is found in the nucleus. Probable transcription factor that regulates neuronal differention, including synapse assembly of the cholinergic motor neuron M4. Activates expression of growth factor, neuropeptide and transcription factor genes, such as TGF-beta dbl-1, FMRFamide-like flp-5 and transcription repressor zag-1, in the M4 neuron. Required for pharynx peristalsis. This chain is Homeobox protein ceh-28, found in Caenorhabditis elegans.